The sequence spans 309 residues: tRNA-cytidine(32) 2-sulfurtransferase (309 aa).

Positions 47 to 52 match the PP-loop motif motif; that stretch reads SGGKDS. Positions 122, 125, and 213 each coordinate [4Fe-4S] cluster.

It belongs to the TtcA family. As to quaternary structure, homodimer. Requires Mg(2+) as cofactor. [4Fe-4S] cluster is required as a cofactor.

Its subcellular location is the cytoplasm. The catalysed reaction is cytidine(32) in tRNA + S-sulfanyl-L-cysteinyl-[cysteine desulfurase] + AH2 + ATP = 2-thiocytidine(32) in tRNA + L-cysteinyl-[cysteine desulfurase] + A + AMP + diphosphate + H(+). The protein operates within tRNA modification. Catalyzes the ATP-dependent 2-thiolation of cytidine in position 32 of tRNA, to form 2-thiocytidine (s(2)C32). The sulfur atoms are provided by the cysteine/cysteine desulfurase (IscS) system. In Erwinia tasmaniensis (strain DSM 17950 / CFBP 7177 / CIP 109463 / NCPPB 4357 / Et1/99), this protein is tRNA-cytidine(32) 2-sulfurtransferase.